The following is a 234-amino-acid chain: Octanoyltransferase (234 aa).

One can recognise a BPL/LPL catalytic domain in the interval 42-226 (PDTPDEFWVV…ELASLIGYET (185 aa)). Substrate-binding positions include 81 to 88 (RGGQVTYH), 157 to 159 (SLG), and 170 to 172 (GLA). Cys188 functions as the Acyl-thioester intermediate in the catalytic mechanism.

The protein belongs to the LipB family.

The protein localises to the cytoplasm. It catalyses the reaction octanoyl-[ACP] + L-lysyl-[protein] = N(6)-octanoyl-L-lysyl-[protein] + holo-[ACP] + H(+). It participates in protein modification; protein lipoylation via endogenous pathway; protein N(6)-(lipoyl)lysine from octanoyl-[acyl-carrier-protein]: step 1/2. Its function is as follows. Catalyzes the transfer of endogenously produced octanoic acid from octanoyl-acyl-carrier-protein onto the lipoyl domains of lipoate-dependent enzymes. Lipoyl-ACP can also act as a substrate although octanoyl-ACP is likely to be the physiological substrate. The sequence is that of Octanoyltransferase from Aeromonas hydrophila subsp. hydrophila (strain ATCC 7966 / DSM 30187 / BCRC 13018 / CCUG 14551 / JCM 1027 / KCTC 2358 / NCIMB 9240 / NCTC 8049).